The following is a 512-amino-acid chain: Cytochrome P450 monooxygenase pbrB (512 aa).

Residues 6–29 (LSFPAAVGAAFGAFAIYVVARCIY) form a helical membrane-spanning segment. Position 452 (Cys452) interacts with heme.

This sequence belongs to the cytochrome P450 family. Requires heme as cofactor.

Its subcellular location is the membrane. The protein operates within secondary metabolite biosynthesis; terpenoid biosynthesis. In terms of biological role, cytochrome P450 monooxygenase; part of the gene cluster that mediates the biosynthesis of the sesquiterpenoid aspterric acid (AA), an inhibitor of dihydroxy-acid dehydratase (DHAD) effective as an herbicide. PbrB catalyzes the second step within the pathway and converts (-)-daucane produced by the terpene cyclase pbrA into an alpha-epoxy carboxylate intermediate which is further converted into the tricyclic aspterric acid by the cytochrome P450 monooxygenase pbrC. This Penicillium brasilianum protein is Cytochrome P450 monooxygenase pbrB.